Consider the following 90-residue polypeptide: Protein S100-A6 (90 aa).

EF-hand domains are found at residues 12-47 and 48-83; these read LVAIFHKYSGREGDKHTLSKKELKELIQKELTIGSK and LQDAEIARLMEDLDRNKDQEVNFQEYVTFLGALALI. Ca(2+)-binding residues include threonine 28 and glutamate 33. Lysine 40 bears the N6-acetyllysine mark. At serine 46 the chain carries Phosphoserine. Residue lysine 47 is modified to N6-acetyllysine; alternate. Residue lysine 47 is modified to N6-succinyllysine; alternate. The Ca(2+) site is built by aspartate 61, asparagine 63, aspartate 65, glutamate 67, and glutamate 72.

Belongs to the S-100 family. In terms of assembly, homodimer; head to tail assembly of 2 subunits. Interacts with CACYBP in a calcium-dependent manner. Interacts with ANXA2 and ANXA11 (via N-terminus). Interacts with SUGT1. Interacts with TP53; has higher affinity for TP53 that is phosphorylated on its N-terminal domain, and lower affinity for TP53 that is phosphorylated on its C-terminal domain. Interacts with tropomyosin. Interacts with FKBP4. Interacts with PPP5C (via TPR repeats); the interaction is calcium-dependent and modulates PPP5C activity. Interacts with TPPP; this interaction inhibits TPPP dimerization. The N-terminus is blocked.

It localises to the nucleus envelope. Its subcellular location is the cytoplasm. The protein localises to the cell membrane. Functionally, may function as calcium sensor and modulator, contributing to cellular calcium signaling. May function by interacting with other proteins, such as TPR-containing proteins, and indirectly play a role in many physiological processes such as the reorganization of the actin cytoskeleton and in cell motility. Binds 2 calcium ions. Calcium binding is cooperative. This chain is Protein S100-A6 (S100A6), found in Homo sapiens (Human).